The following is a 59-amino-acid chain: Cytochrome c oxidase subunit 9, mitochondrial (59 aa).

Topologically, residues 2–8 are mitochondrial matrix; the sequence is TIAPITG. A helical transmembrane segment spans residues 9-44; the sequence is TIKRRVIMDIVLGFSLGGVMASYWWWGFHMDKINKR. Residues 45–56 are Mitochondrial intermembrane-facing; the sequence is EKFYAELAERKK. Residues 57 to 59 constitute a propeptide, removed in mature form; the sequence is QEN.

It belongs to the fungal cytochrome c oxidase subunit 7a family. As to quaternary structure, component of the cytochrome c oxidase (complex IV, CIV), a multisubunit enzyme composed of 12 subunits. The complex is composed of a catalytic core of 3 subunits COX1, COX2 and COX3, encoded in the mitochondrial DNA, and 9 supernumerary subunits COX4, COX5A (or COX5B), COX6, COX7, COX8, COX9, COX12, COX13 and COX26, which are encoded in the nuclear genome. The complex exists as a monomer or a dimer and forms supercomplexes (SCs) in the inner mitochondrial membrane with a dimer of ubiquinol-cytochrome c oxidoreductase (cytochrome b-c1 complex, complex III, CIII), resulting in 2 different assemblies (supercomplexes III(2)IV and III(2)IV(2)).

The protein localises to the mitochondrion inner membrane. The protein operates within energy metabolism; oxidative phosphorylation. In terms of biological role, component of the cytochrome c oxidase, the last enzyme in the mitochondrial electron transport chain which drives oxidative phosphorylation. The respiratory chain contains 3 multisubunit complexes succinate dehydrogenase (complex II, CII), ubiquinol-cytochrome c oxidoreductase (cytochrome b-c1 complex, complex III, CIII) and cytochrome c oxidase (complex IV, CIV), that cooperate to transfer electrons derived from NADH and succinate to molecular oxygen, creating an electrochemical gradient over the inner membrane that drives transmembrane transport and the ATP synthase. Cytochrome c oxidase is the component of the respiratory chain that catalyzes the reduction of oxygen to water. Electrons originating from reduced cytochrome c in the intermembrane space (IMS) are transferred via the dinuclear copper A center (CU(A)) of COX2 and heme A of COX1 to the active site in COX1, a binuclear center (BNC) formed by heme A3 and copper B (CU(B)). The BNC reduces molecular oxygen to 2 water molecules using 4 electrons from cytochrome c in the IMS and 4 protons from the mitochondrial matrix. The chain is Cytochrome c oxidase subunit 9, mitochondrial (COX9) from Saccharomyces cerevisiae (strain ATCC 204508 / S288c) (Baker's yeast).